Reading from the N-terminus, the 467-residue chain is Mothers against decapentaplegic homolog 2 (467 aa).

S2 bears the N-acetylserine mark. Position 8 is a phosphothreonine (T8). Residues 10–176 (PVVKRLLGWK…YQRVETPVLP (167 aa)) enclose the MH1 domain. K19 carries the post-translational modification N6-acetyllysine. Zn(2+)-binding residues include C74, C149, C161, and H166. Residues 207–217 (PAGIEPQSNYI) show a composition bias toward polar residues. Residues 207-251 (PAGIEPQSNYIPETPPPGYISEDGETSDQQLNQSMDTGSPAELSP) are disordered. T220 is subject to Phosphothreonine. The PY-motif signature appears at 221–225 (PPPGY). Residues 233–243 (SDQQLNQSMDT) show a composition bias toward polar residues. S240 carries the phosphoserine; by CAMK2 modification. Residues S245, S250, S255, S458, S460, and S464 each carry the phosphoserine modification. One can recognise an MH2 domain in the interval 274–467 (WCSIAYYELN…SPSVRCSSMS (194 aa)). Phosphoserine; by TGFBR1 occurs at positions 465 and 467.

This sequence belongs to the dwarfin/SMAD family. In terms of assembly, monomer; in the absence of TGF-beta. Heterodimer; in the presence of TGF-beta. Forms a heterodimer with co-SMAD, SMAD4, in the nucleus to form the transactivation complex SMAD2/SMAD4. Found in a complex with SMAD3 and TRIM33 upon addition of TGF-beta. Identified in a complex that contains at least ZNF451, SMAD2, SMAD3 and SMAD4. Interacts (via the MH2 domain) with ZFYVE9; may form trimers with the SMAD4 co-SMAD. Interacts with TAZ/WWRT1. Interacts with FOXH1. Interacts with SNW1. Interacts with CREB-binding protein (CBP) and EP300. Interacts with SNON. Interacts with ALK4/ACVR1B. Interacts with SKOR1. Interacts with SKOR2. Interacts with PRDM16. Interacts (via MH2 domain) with LEMD3. Interacts with RBPMS. Interacts with WWP1. Interacts (dephosphorylated form, via the MH1 and MH2 domains) with RANBP3 (via its C-terminal R domain); the interaction results in the export of dephosphorylated SMAD3 out of the nucleus and termination of the TGF-beta signaling. Interacts with PDPK1 (via PH domain). Interacts with DAB2; the interactions are enhanced upon TGF-beta stimulation. Interacts with USP15. Interacts with PPP5C. Interacts with LDLRAD4 (via the SMAD interaction motif). Interacts (via MH2 domain) with PMEPA1 (via the SMAD interaction motif). Interacts with ZFHX3. Interacts with ZNF451. Interacts with SMURF2 when phosphorylated on Ser-465/467. Interacts with PPM1A. Interacts with TGF-beta. Interacts with TGFBR1. Interacts with TGIF. Interacts with SMAD3 and TRIM33. Interacts with ZNF580. Interacts with NEDD4L in response to TGF-beta. Interacts with HGS. Interacts with AIP1. Interacts with WWP1. Interacts with PML. Interacts weakly with ZNF8. Interacts (when phosphorylated) with RNF111; RNF111 acts as an enhancer of the transcriptional responses by mediating ubiquitination and degradation of SMAD2 inhibitors. Interacts with YAP1 (when phosphorylated at 'Ser-55'). Interacts when phosphorylated with IPO7; the interaction facilitates translocation of SMAD2 to the nucleus. Interacts with MTMR4; negatively regulates TGF-beta signaling through SMAD2 dephosphorylation and retention in endosomes. Post-translationally, in response to TGF-beta, phosphorylated on the C-terminal SXS motif by TGF-beta and activin type 1 receptor kinases, phosphorylation declines progressively in a KMT5A-dependent manner. Phosphorylation in this motif is required for interaction with a number of proteins including SMURF2, SNON and SMAD4 in response to TGF-beta. Dephosphorylated in this motif by PPM1A leading to disruption of the SMAD2/3-SMAD4 complex, nuclear export and termination of the TGF-beta signaling. In response to decorin, the naturally occurring inhibitor of TGF-beta signaling, phosphorylated on Ser-240 by CaMK2. Phosphorylated by MAPK3 upon EGF stimulation; which increases transcriptional activity and stability, and is blocked by calmodulin. Phosphorylated by PDPK1. Acetylated on Lys-19 by coactivators in response to TGF-beta signaling, which increases transcriptional activity. In terms of processing, in response to TGF-beta, ubiquitinated by NEDD4L; which promotes its degradation. Monoubiquitinated, leading to prevent DNA-binding. Deubiquitination by USP15 alleviates inhibition and promotes activation of TGF-beta target genes. Ubiquitinated by RNF111, leading to its degradation: only SMAD2 proteins that are 'in use' are targeted by RNF111, RNF111 playing a key role in activating SMAD2 and regulating its turnover.

Its subcellular location is the cytoplasm. It localises to the nucleus. Receptor-regulated SMAD (R-SMAD) that is an intracellular signal transducer and transcriptional modulator activated by TGF-beta (transforming growth factor) and activin type 1 receptor kinases. Binds the TRE element in the promoter region of many genes that are regulated by TGF-beta and, on formation of the SMAD2/SMAD4 complex, activates transcription. Promotes TGFB1-mediated transcription of odontoblastic differentiation genes in dental papilla cells. Positively regulates PDPK1 kinase activity by stimulating its dissociation from the 14-3-3 protein YWHAQ which acts as a negative regulator. This is Mothers against decapentaplegic homolog 2 (SMAD2) from Bos taurus (Bovine).